Here is a 565-residue protein sequence, read N- to C-terminus: Deoxyribodipyrimidine photo-lyase, mitochondrial (565 aa).

The region spanning 75–226 is the Photolyase/cryptochrome alpha/beta domain; the sequence is STVMHWFRND…QLKYYHDSCI (152 aa). Residues Y326 and 338–342 contribute to the FAD site; that span reads TSGLS. Interaction with DNA regions lie at residues 384-391 and 451-452; these read EVAWRDFY and NR. 482-484 contributes to the FAD binding site; it reads DGD. Q514 contacts DNA.

This sequence belongs to the DNA photolyase class-1 family. In terms of assembly, monomer. Requires FAD as cofactor. The cofactor is (6R)-5,10-methylene-5,6,7,8-tetrahydrofolate.

The protein resides in the nucleus. It is found in the mitochondrion. The enzyme catalyses cyclobutadipyrimidine (in DNA) = 2 pyrimidine residues (in DNA).. Its function is as follows. Involved in repair of UV radiation-induced DNA damage. Catalyzes the light-dependent monomerization (300-600 nm) of cyclobutyl pyrimidine dimers (in cis-syn configuration), which are formed between adjacent bases on the same DNA strand upon exposure to ultraviolet radiation. This Saccharomyces cerevisiae (strain ATCC 204508 / S288c) (Baker's yeast) protein is Deoxyribodipyrimidine photo-lyase, mitochondrial (PHR1).